Here is a 288-residue protein sequence, read N- to C-terminus: Undecaprenyl-diphosphatase (288 aa).

Transmembrane regions (helical) follow at residues 25-45 (GITE…NEFL), 53-73 (FIDM…MVIY), 93-113 (WKLW…GLLL), 121-141 (LSNF…FIWI), 171-191 (VLSI…GIIV), 196-216 (SVAA…YSGL), 231-251 (GQAA…LFVI), and 263-283 (FTVF…YGAV).

It belongs to the UppP family.

Its subcellular location is the cell membrane. The enzyme catalyses di-trans,octa-cis-undecaprenyl diphosphate + H2O = di-trans,octa-cis-undecaprenyl phosphate + phosphate + H(+). Its function is as follows. Catalyzes the dephosphorylation of undecaprenyl diphosphate (UPP). Confers resistance to bacitracin. This chain is Undecaprenyl-diphosphatase, found in Streptococcus thermophilus (strain ATCC BAA-250 / LMG 18311).